The sequence spans 540 residues: Cytochrome P450 monooxygenase ORF5 (540 aa).

Residues 48 to 68 traverse the membrane as a helical segment; sequence YHALGTAIALFACACAYALVA. 2 N-linked (GlcNAc...) asparagine glycosylation sites follow: Asn-376 and Asn-460. Cys-483 is a binding site for heme.

Belongs to the cytochrome P450 family. It depends on heme as a cofactor.

The protein localises to the membrane. The protein operates within sesquiterpene biosynthesis. Functionally, cytochrome P450 monooxygenase; part of the gene cluster that mediates the biosynthesis of PR-toxin, a bicyclic sesquiterpene belonging to the eremophilane class and acting as a mycotoxin. The first step of the pathway is catalyzed by the aristolochene synthase which performs the cyclization of trans,trans-farnesyl diphosphate (FPP) to the bicyclic sesquiterpene aristolochene. Following the formation of aristolochene, the non-oxygenated aristolochene is converted to the trioxygenated intermediate eremofortin B, via 7-epi-neopetasone. This conversion appears to involve three enzymes, a hydroxysterol oxidase-like enzyme, the quinone-oxidase prx3 that forms the quinone-type-structure in the bicyclic nucleus of aristolochene with the C8-oxo group and the C-3 hydroxyl group, and the P450 monooxygenase ORF6 that introduces the epoxide at the double bond between carbons 1 and 2. No monoxy or dioxy-intermediates have been reported to be released to the broth, so these three early oxidative reactions may be coupled together. Eremofortin B is further oxidized by another P450 monooxygenase, that introduces a second epoxide between carbons 7 and 11 prior to acetylation to eremofortin A by the acetyltransferase ORF8. The second epoxidation may be performed by a second P450 monooxygenase. After the acetylation step, eremofortin A is converted to eremofortin C and then to PR-toxin. First the conversion of eremofortin A to eremofortin C proceeds by oxidation of the side chain of the molecule at C-12 and is catalyzed by the short-chain oxidoreductase prx1. The cytochrome P450 monooxygenase ORF6 is probably also involved in this step. The primary alcohol formed at C-12 is finally oxidized by the short-chain alcohol dehydrogenase prx4 that forms PR-toxin. The polypeptide is Cytochrome P450 monooxygenase ORF5 (Penicillium roqueforti (strain FM164)).